The sequence spans 556 residues: Protein F37C4.5 (556 aa).

At Ala2 the chain carries N-acetylalanine.

The sequence is that of Protein F37C4.5 from Caenorhabditis elegans.